An 87-amino-acid chain; its full sequence is Acylphosphatase (87 aa).

The Acylphosphatase-like domain maps to 2–87 (RLTALVSGHV…ETGLREFHIY (86 aa)). Catalysis depends on residues Arg17 and Asn35.

This sequence belongs to the acylphosphatase family.

It catalyses the reaction an acyl phosphate + H2O = a carboxylate + phosphate + H(+). The polypeptide is Acylphosphatase (acyP) (Deinococcus radiodurans (strain ATCC 13939 / DSM 20539 / JCM 16871 / CCUG 27074 / LMG 4051 / NBRC 15346 / NCIMB 9279 / VKM B-1422 / R1)).